The chain runs to 426 residues: Lactate racemase (426 aa).

72-75 lines the Ni(II)-pyridinium-3,5-bisthiocarboxylate mononucleotide pocket; it reads DHTR. Residues H108 and H174 each act as proton donor/acceptor in the active site. Residues K184 and H200 each contribute to the Ni(II)-pyridinium-3,5-bisthiocarboxylate mononucleotide site. The substrate site is built by Q295 and K298.

It belongs to the lactate racemase family. In terms of assembly, homodimer. Ni(II)-pyridinium-3,5-bisthiocarboxylate mononucleotide is required as a cofactor.

The catalysed reaction is (S)-lactate = (R)-lactate. Its activity is regulated as follows. Activation of the apo-enzyme requires the three accessory proteins LarB, LarE and LarC, that are involved in the biosynthesis of the nickel-pincer cofactor of LarA. Functionally, catalyzes the interconversion between the D- and L-isomers of lactate. This is Lactate racemase from Thermoanaerobacterium thermosaccharolyticum (strain ATCC 7956 / DSM 571 / NCIMB 9385 / NCA 3814 / NCTC 13789 / WDCM 00135 / 2032) (Clostridium thermosaccharolyticum).